Consider the following 210-residue polypeptide: Putative odorant-binding protein A5 (210 aa).

Residues 1–19 (MKLPALHLLFLGFICLARS) form the signal peptide.

Belongs to the phosphatidylethanolamine-binding protein family. As to expression, cells at the bases of a few scattered sensilla on the posterior surface of the antenna.

It localises to the secreted. This chain is Putative odorant-binding protein A5 (a5), found in Drosophila melanogaster (Fruit fly).